The chain runs to 439 residues: Ribosomal protein uS12 methylthiotransferase RimO (439 aa).

The region spanning 3–115 (NKLHIVSLGC…IDELLVEKKS (113 aa)) is the MTTase N-terminal domain. Residues Cys-12, Cys-46, Cys-78, Cys-146, Cys-150, and Cys-153 each contribute to the [4Fe-4S] cluster site. Positions 132 to 361 (TGSTYHAYIK…GKIAADVMQA (230 aa)) constitute a Radical SAM core domain.

This sequence belongs to the methylthiotransferase family. RimO subfamily. [4Fe-4S] cluster is required as a cofactor.

It is found in the cytoplasm. It catalyses the reaction L-aspartate(89)-[ribosomal protein uS12]-hydrogen + (sulfur carrier)-SH + AH2 + 2 S-adenosyl-L-methionine = 3-methylsulfanyl-L-aspartate(89)-[ribosomal protein uS12]-hydrogen + (sulfur carrier)-H + 5'-deoxyadenosine + L-methionine + A + S-adenosyl-L-homocysteine + 2 H(+). In terms of biological role, catalyzes the methylthiolation of an aspartic acid residue of ribosomal protein uS12. The sequence is that of Ribosomal protein uS12 methylthiotransferase RimO from Sulfurimonas denitrificans (strain ATCC 33889 / DSM 1251) (Thiomicrospira denitrificans (strain ATCC 33889 / DSM 1251)).